We begin with the raw amino-acid sequence, 160 residues long: Major strawberry allergen Fra a 1.07 (160 aa).

It belongs to the BetVI family. Post-translationally, phosphorylated in vivo. Phosphorylation prevents its activity as ribonuclease. Highly expressed in roots. Expressed a low levels in ripe red fruits.

Functionally, possesses ribonuclease activity in vitro. The chain is Major strawberry allergen Fra a 1.07 from Fragaria ananassa (Strawberry).